We begin with the raw amino-acid sequence, 1149 residues long: Guanine nucleotide exchange factor DBS (1149 aa).

A CRAL-TRIO domain is found at 52–224 (AATASDEIMH…DLGGTLDYCH (173 aa)). One copy of the Spectrin repeat lies at 351-456 (LQLRHFEQGF…VTRRRGLLSK (106 aa)). S457, S462, S471, and S480 each carry phosphoserine. The stretch at 503-529 (LETGAENKIQELNEIYKEYECILNQDL) forms a coiled coil. The segment at 555-627 (KKLAAKQTRP…RTSSTGEEEE (73 aa)) is disordered. Over residues 583–594 (PGSWRSSENSSS) the composition is skewed to low complexity. Over residues 607–616 (AKSEMSEPRQ) the composition is skewed to basic and acidic residues. S621 carries the post-translational modification Phosphoserine. T622 is modified (phosphothreonine). Residues 632 to 812 (LRRHVMNELL…LGILKAVNDS (181 aa)) form the DH domain. The PH domain occupies 841-950 (TDHKKGHTKV…IRKVLTSQLQ (110 aa)). The tract at residues 956–1033 (SQHRALEQSH…EAPEEDGGWS (78 aa)) is disordered. The segment covering 966-978 (SLPLPTPSSTSPT) has biased composition (low complexity). Phosphoserine occurs at positions 1033, 1034, 1041, and 1042. The SH3 domain maps to 1055 to 1116 (LVPGKYTVVM…PASSLSTLLG (62 aa)).

Belongs to the MCF2 family. As to quaternary structure, interacts with GTP-bound RAC1. Interacts with CDC42. Interacts with RHOA. Interacts with CCPG1, which results in specific inhibition of its exchange activity toward RHOA, but does not affect its activity on CDC42. In terms of tissue distribution, expressed at low levels in several hemopoietic cell lines and in thymus and spleen, and at higher levels in other tissues, particularly in brain.

It is found in the cytoplasm. Its subcellular location is the cell membrane. Guanine nucleotide exchange factor that catalyzes guanine nucleotide exchange on RHOA and CDC42, and thereby contributes to the regulation of RHOA and CDC42 signaling pathways. Seems to lack activity with RAC1. Becomes activated and highly tumorigenic by truncation of the N-terminus. The protein is Guanine nucleotide exchange factor DBS (Mcf2l) of Mus musculus (Mouse).